The sequence spans 630 residues: Arginine--tRNA ligase (630 aa).

The short motif at 120–130 (ANPIHPLHIGH) is the 'HIGH' region element.

It belongs to the class-I aminoacyl-tRNA synthetase family.

It is found in the cytoplasm. The enzyme catalyses tRNA(Arg) + L-arginine + ATP = L-arginyl-tRNA(Arg) + AMP + diphosphate. This Pyrobaculum arsenaticum (strain DSM 13514 / JCM 11321 / PZ6) protein is Arginine--tRNA ligase.